An 818-amino-acid chain; its full sequence is MLLWPGASGLPPPRIFPSLLVVVALVGLLPVLRSYGLQISPTASTIRGSEPPRERSIGDVTTAPPELAPESRPVNHSFAEHSPKARKAFPVLGIDYQHVRIPFEIALWILLACLMKIGFHVIPTISSIVPESCLLIVVGLLVGGLIKGVGETPPILQSEVFFLFLLPPIILDAGYFLPLRQFTENLGTILIFAVVGTLWNAFFLGGLMYAVCLVGGEQINNIGLLENLLFGSIISAVDPVAVLAVFEEIHINELLHILVFGESLLNDAVTVVLYHLFEEFANYDRVGIVDIILGFLSFFVVSLGGVFVGVVYGVIAAFTSRFTSHIRVIEPLFVFLYSYMAYLSAELFHLSGIMALIASGVVMRPYVEANISHKSHTTIKYFLKMWSSVSETLIFIFLGVSTVAGSHHWNWTFVISTLLFCLIARVLGVLGLTWFINKFRIVKLTPKDQFIIAYGGLRGAIAFSLGYLLDKKHFPMCDLFLTAIITVIFFTVFVQGMTIRPLVDLLAVKKKQETKRSINEEIHTQFLDHLLTGIEDICGHYGHHHWKDKLNRFNKKYVKKCLIAGERSKEPQLIAFYHKMEMKQAIELVESGGMGKIPSAVSTVSMQNIHPKSLPAERILPALSKDKEEEIRKILRNNLQKTRQRLRSYNRHTLVADPYEEAWNQMLLRRQKARQLEQKISNYLTVPAHKLDSPTMSRARIGSDPLAYEPKADLPVITIDPASPQSPESVDLVNEELKGKVLGLSRDPGRLAEEEEDDKDPDGGLTMRTKEPSSPGTDDVFTPAPSDSPSSQRIQRCLSDPGPHPEPGEGEPFIPKGQ.

At 1-98 (MLLWPGASGL…FPVLGIDYQH (98 aa)) the chain is on the extracellular side. Residues 44–76 (STIRGSEPPRERSIGDVTTAPPELAPESRPVNH) form a disordered region. N75 is a glycosylation site (N-linked (GlcNAc...) asparagine). The helical transmembrane segment at 99-121 (VRIPFEIALWILLACLMKIGFHV) threads the bilayer. The Cytoplasmic segment spans residues 122–130 (IPTISSIVP). Residues 131–148 (ESCLLIVVGLLVGGLIKG) form a helical membrane-spanning segment. At 149–158 (VGETPPILQS) the chain is on the extracellular side. A helical membrane pass occupies residues 159–176 (EVFFLFLLPPIILDAGYF). Over 177–186 (LPLRQFTENL) the chain is Cytoplasmic. Residues 187-215 (GTILIFAVVGTLWNAFFLGGLMYAVCLVG) traverse the membrane as a helical segment. At 216 to 222 (GEQINNI) the chain is on the extracellular side. Residues 223 to 249 (GLLENLLFGSIISAVDPVAVLAVFEEI) form a helical membrane-spanning segment. Residues 250–252 (HIN) lie on the Cytoplasmic side of the membrane. Residues 253–283 (ELLHILVFGESLLNDAVTVVLYHLFEEFANY) traverse the membrane as a helical segment. Topologically, residues 284–287 (DRVG) are extracellular. Residues 288–322 (IVDIILGFLSFFVVSLGGVFVGVVYGVIAAFTSRF) form a helical membrane-spanning segment. The Cytoplasmic portion of the chain corresponds to 323–328 (TSHIRV). A helical transmembrane segment spans residues 329-341 (IEPLFVFLYSYMA). The Extracellular segment spans residues 342 to 350 (YLSAELFHL). Residues 351-371 (SGIMALIASGVVMRPYVEANI) form a helical membrane-spanning segment. Topologically, residues 372 to 373 (SH) are cytoplasmic. Residues 374–404 (KSHTTIKYFLKMWSSVSETLIFIFLGVSTVA) traverse the membrane as a helical segment. The Extracellular segment spans residues 405 to 410 (GSHHWN). Residues 411–438 (WTFVISTLLFCLIARVLGVLGLTWFINK) form a helical membrane-spanning segment. Over 439–444 (FRIVKL) the chain is Cytoplasmic. The chain crosses the membrane as a helical span at residues 445–469 (TPKDQFIIAYGGLRGAIAFSLGYLL). Topologically, residues 470–475 (DKKHFP) are extracellular. Residues 476-505 (MCDLFLTAIITVIFFTVFVQGMTIRPLVDL) form a helical membrane-spanning segment. An interaction with TESC region spans residues 503-545 (VDLLAVKKKQETKRSINEEIHTQFLDHLLTGIEDICGHYGHHH). Residues 506–818 (LAVKKKQETK…EGEPFIPKGQ (313 aa)) lie on the Cytoplasmic side of the membrane. The segment at 509–516 (KKKQETKR) is PI(4,5)P2-binding region. The interaction with CHP2 stretch occupies residues 515–545 (KRSINEEIHTQFLDHLLTGIEDICGHYGHHH). The tract at residues 540–545 (HYGHHH) is confers pH-dependent PI(4,5)P2 binding. The segment at 552–560 (RFNKKYVKK) is PI(4,5)P2-binding region. Residues S599 and S602 each carry the phosphoserine modification. Phosphothreonine is present on T603. Phosphoserine occurs at positions 605 and 648. The interval 633-818 (KILRNNLQKT…EGEPFIPKGQ (186 aa)) is interaction with TESC. An interaction with CALM1 region spans residues 633-818 (KILRNNLQKT…EGEPFIPKGQ (186 aa)). An interaction with PPP3CA region spans residues 684–687 (LTVP). Phosphoserine occurs at positions 693, 697, and 703. Residues 715 to 720 (PVITID) are interaction with PPP3CA. Residues S723, S726, and S729 each carry the phosphoserine modification. The tract at residues 741–818 (VLGLSRDPGR…EGEPFIPKGQ (78 aa)) is disordered. T782 is subject to Phosphothreonine. Residues 785–794 (PSDSPSSQRI) are compositionally biased toward polar residues. A phosphoserine mark is found at S788, S790, and S799.

The protein belongs to the monovalent cation:proton antiporter 1 (CPA1) transporter (TC 2.A.36) family. In terms of assembly, homodimer; dimerization is crucial for its function. Oligomer. Interacts with CALM in a calcium-dependent manner. Interacts with TESC. Interacts (via the juxtamembrane region of the cytoplasmic C-terminal domain) with CHP1; the interaction occurs at the plasma membrane in a calcium-dependent manner. Interacts with CHP2; the interaction occurs in a calcium-dependent manner. Interacts with EZR; regulates the cytoskeletal interactions of SLC9A1 and promotes stress fiber formation. In terms of processing, ubiquitinated, leading to its degradation by the proteasome. Ubiquitination is reduced by CHP1. O-glycosylated. Post-translationally, palmitoylated; may play a major role in SLC9A1 regulation. In terms of processing, phosphorylation at Thr-782 increases SLC9A1 activity. Specifically dephosphorylated at Thr-782 by PPP3CA that negatively regulates SLC9A1 activity. Phosphorylation at Ser-648 by AKT1 reduces SLC9A1 binding to CALM1.

Its subcellular location is the cell membrane. It is found in the basolateral cell membrane. It carries out the reaction Na(+)(in) + H(+)(out) = Na(+)(out) + H(+)(in). The catalysed reaction is Li(+)(out) + H(+)(in) = Li(+)(in) + H(+)(out). It catalyses the reaction Li(+)(in) + Na(+)(out) = Li(+)(out) + Na(+)(in). Its activity is regulated as follows. Activated at acidic pHs. Inhibited by amiloride and 5-amino-substituted derivatives. Inhibited by cariporide and eniporide. Phosphatidylinositol 4,5-bisphosphate (PI(4,5)P2) and phosphatidylinositol 3,4,5-trisphosphate (PI(3,4,5)P3) bind and differentially regulate SLC9A1 activity. Electroneutral Na(+) /H(+) antiporter that extrudes Na(+) in exchange for external protons driven by the inward sodium ion chemical gradient, protecting cells from acidification that occurs from metabolism. Exchanges intracellular H(+) ions for extracellular Na(+) in 1:1 stoichiometry. Plays a key role in maintening intracellular pH neutral and cell volume, and thus is important for cell growth, proliferation, migration and survival. In addition, can transport lithium Li(+) and also functions as a Na(+)/Li(+) antiporter. SLC9A1 also functions in membrane anchoring and organization of scaffolding complexes that coordinate signaling inputs. This is Sodium/hydrogen exchanger 1 (SLC9A1) from Bos taurus (Bovine).